A 215-amino-acid polypeptide reads, in one-letter code: Ribonuclease T (215 aa).

In terms of domain architecture, Exonuclease spans 20–194 (VVIDVETAGF…YDTEQTAQLF (175 aa)). Mg(2+) is bound by residues Asp-23, Glu-25, His-181, and Asp-186. The active-site Proton donor/acceptor is the His-181.

This sequence belongs to the RNase T family. Homodimer. It depends on Mg(2+) as a cofactor.

In terms of biological role, trims short 3' overhangs of a variety of RNA species, leaving a one or two nucleotide 3' overhang. Responsible for the end-turnover of tRNA: specifically removes the terminal AMP residue from uncharged tRNA (tRNA-C-C-A). Also appears to be involved in tRNA biosynthesis. The sequence is that of Ribonuclease T from Klebsiella pneumoniae subsp. pneumoniae (strain ATCC 700721 / MGH 78578).